We begin with the raw amino-acid sequence, 332 residues long: Probable allantoicase (332 aa).

This sequence belongs to the allantoicase family.

The enzyme catalyses allantoate + H2O = (S)-ureidoglycolate + urea. It functions in the pathway nitrogen metabolism; (S)-allantoin degradation; (S)-ureidoglycolate from allantoate (aminidohydrolase route): step 1/1. This is Probable allantoicase from Pseudomonas aeruginosa (strain LESB58).